We begin with the raw amino-acid sequence, 389 residues long: Ribonucleoside-diphosphate reductase subunit M2 (389 aa).

A Phosphoserine modification is found at Ser20. Thr33 is subject to Phosphothreonine. Residues 49–51 carry the Cy motif; that stretch reads RRI. Residues Asp138, Glu169, and His172 each coordinate Fe cation. The active site involves Tyr176. Positions 232, 266, and 269 each coordinate Fe cation.

The protein belongs to the ribonucleoside diphosphate reductase small chain family. As to quaternary structure, heterodimer of a large and a small subunit. Interacts (via Cy motif and when phosphorylated at Thr-33) with CCNF; the interaction occurs exclusively in G2 and early M. Requires Fe cation as cofactor. In terms of processing, phosphorylation on Ser-20 relieves the inhibitory effect on Wnt signaling. Phosphorylated on Thr-33 by CDK1 and CDK2; predominantly in G2 and M phase. Post-translationally, ubiquitinated by the SCF(CCNF) E3 ubiquitin-protein ligase complex; leading to its degradation by the proteasome.

The protein localises to the cytoplasm. The protein resides in the nucleus. The enzyme catalyses a 2'-deoxyribonucleoside 5'-diphosphate + [thioredoxin]-disulfide + H2O = a ribonucleoside 5'-diphosphate + [thioredoxin]-dithiol. Provides the precursors necessary for DNA synthesis. Catalyzes the biosynthesis of deoxyribonucleotides from the corresponding ribonucleotides. Inhibits Wnt signaling. In Macaca fascicularis (Crab-eating macaque), this protein is Ribonucleoside-diphosphate reductase subunit M2 (RRM2).